A 306-amino-acid chain; its full sequence is tRNA pseudouridine synthase B (306 aa).

The active-site Nucleophile is Asp-48.

It belongs to the pseudouridine synthase TruB family. Type 1 subfamily.

The enzyme catalyses uridine(55) in tRNA = pseudouridine(55) in tRNA. In terms of biological role, responsible for synthesis of pseudouridine from uracil-55 in the psi GC loop of transfer RNAs. In Haemophilus influenzae (strain PittEE), this protein is tRNA pseudouridine synthase B.